Reading from the N-terminus, the 419-residue chain is Queuine tRNA-ribosyltransferase accessory subunit 2 (419 aa).

Zn(2+) is bound by residues C326, C328, C331, and H357.

Belongs to the queuine tRNA-ribosyltransferase family. QTRT2 subfamily. As to quaternary structure, heterodimer of a catalytic subunit and an accessory subunit. Zn(2+) serves as cofactor.

The protein resides in the cytoplasm. Its function is as follows. Non-catalytic subunit of the queuine tRNA-ribosyltransferase (TGT) that catalyzes the base-exchange of a guanine (G) residue with queuine (Q) at position 34 (anticodon wobble position) in tRNAs with GU(N) anticodons (tRNA-Asp, -Asn, -His and -Tyr), resulting in the hypermodified nucleoside queuosine (7-(((4,5-cis-dihydroxy-2-cyclopenten-1-yl)amino)methyl)-7-deazaguanosine). In Drosophila grimshawi (Hawaiian fruit fly), this protein is Queuine tRNA-ribosyltransferase accessory subunit 2.